A 299-amino-acid chain; its full sequence is Oxygen-dependent coproporphyrinogen-III oxidase (299 aa).

S92 contacts substrate. Residues H96 and H106 each coordinate Mn(2+). The active-site Proton donor is H106. 108 to 110 (NVR) is a substrate binding site. Residues H145 and H175 each contribute to the Mn(2+) site. The interval 240-275 (YVEFNLVWDRGTLFGLQTGGRTESILMSMPPLVRWE) is important for dimerization. 258-260 (GGR) contacts substrate.

This sequence belongs to the aerobic coproporphyrinogen-III oxidase family. Homodimer. It depends on Mn(2+) as a cofactor.

It localises to the cytoplasm. It catalyses the reaction coproporphyrinogen III + O2 + 2 H(+) = protoporphyrinogen IX + 2 CO2 + 2 H2O. Its pathway is porphyrin-containing compound metabolism; protoporphyrin-IX biosynthesis; protoporphyrinogen-IX from coproporphyrinogen-III (O2 route): step 1/1. Functionally, involved in the heme biosynthesis. Catalyzes the aerobic oxidative decarboxylation of propionate groups of rings A and B of coproporphyrinogen-III to yield the vinyl groups in protoporphyrinogen-IX. The chain is Oxygen-dependent coproporphyrinogen-III oxidase from Escherichia coli O127:H6 (strain E2348/69 / EPEC).